A 93-amino-acid polypeptide reads, in one-letter code: MKTLLLTLVVVTIVCLDLGNSFSCYKTPHVKSEPCAPGQNLCYTKTWCDAFCFSRGRVIELGCAATCPPAEPKKDISCCSTDNCNPHPAHQSR.

An N-terminal signal peptide occupies residues 1–21; that stretch reads MKTLLLTLVVVTIVCLDLGNS. 5 disulfides stabilise this stretch: Cys-24–Cys-42, Cys-35–Cys-63, Cys-48–Cys-52, Cys-67–Cys-78, and Cys-79–Cys-84.

Belongs to the three-finger toxin family. Long-chain subfamily. Type II alpha-neurotoxin sub-subfamily. As to expression, expressed by the venom gland.

It is found in the secreted. Functionally, binds with high affinity to muscular (alpha-1/CHRNA1) and neuronal (alpha-7/CHRNA7) nicotinic acetylcholine receptor (nAChR) and inhibits acetylcholine from binding to the receptor, thereby impairing neuromuscular and neuronal transmission. The protein is Long neurotoxin 1 of Tropidechis carinatus (Australian rough-scaled snake).